The following is a 139-amino-acid chain: Transcription antitermination protein NusB (139 aa).

The protein belongs to the NusB family.

Involved in transcription antitermination. Required for transcription of ribosomal RNA (rRNA) genes. Binds specifically to the boxA antiterminator sequence of the ribosomal RNA (rrn) operons. In Rubrobacter xylanophilus (strain DSM 9941 / JCM 11954 / NBRC 16129 / PRD-1), this protein is Transcription antitermination protein NusB.